The following is a 486-amino-acid chain: ATP-dependent 6-phosphofructokinase (486 aa).

Residues G105, R171–G172, and G196–T199 contribute to the ATP site. Residue D197 coordinates Mg(2+). Substrate is bound by residues T225–D227, M270–R272, E323, and Y378–R381. The active-site Proton acceptor is D227. The short motif at S484–V486 is the Peroxisomal targeting signal element.

The protein belongs to the phosphofructokinase type A (PFKA) family. PPi-dependent PFK group II subfamily. Atypical ATP-dependent clade 'X' sub-subfamily. As to quaternary structure, homotetramer. Requires Mg(2+) as cofactor.

The protein resides in the glycosome. The enzyme catalyses beta-D-fructose 6-phosphate + ATP = beta-D-fructose 1,6-bisphosphate + ADP + H(+). It functions in the pathway carbohydrate degradation; glycolysis; D-glyceraldehyde 3-phosphate and glycerone phosphate from D-glucose: step 3/4. Its activity is regulated as follows. Allosterically activated by AMP. Its function is as follows. Catalyzes the phosphorylation of D-fructose 6-phosphate to fructose 1,6-bisphosphate by ATP, the first committing step of glycolysis. The sequence is that of ATP-dependent 6-phosphofructokinase from Leishmania donovani.